The primary structure comprises 284 residues: Homeobox protein Hox-D13 (284 aa).

Residues 217 to 276 constitute a DNA-binding region (homeobox); the sequence is GRKKRVPYTKTQLKELEREYATNKFITKEKRRRISTATNLTERQVTIWFQNRRVKEKKVV.

The protein belongs to the Abd-B homeobox family.

The protein localises to the nucleus. Sequence-specific transcription factor that binds gene promoters and activates their transcription. Part of a developmental regulatory system that provides cells with specific positional identities on the anterior-posterior axis. This Heterodontus francisci (Horn shark) protein is Homeobox protein Hox-D13 (HOXD13).